Here is a 249-residue protein sequence, read N- to C-terminus: ATP synthase subunit a (249 aa).

6 consecutive transmembrane segments (helical) span residues 30–50 (QSPL…YVGM), 86–106 (FFPF…LGLL), 115–135 (HIAV…LASI), 146–166 (FLPA…EIIS), 191–211 (VFAG…VLAI), and 218–238 (IALT…FAIL).

The protein belongs to the ATPase A chain family. As to quaternary structure, F-type ATPases have 2 components, CF(1) - the catalytic core - and CF(0) - the membrane proton channel. CF(1) has five subunits: alpha(3), beta(3), gamma(1), delta(1), epsilon(1). CF(0) has three main subunits: a(1), b(2) and c(9-12). The alpha and beta chains form an alternating ring which encloses part of the gamma chain. CF(1) is attached to CF(0) by a central stalk formed by the gamma and epsilon chains, while a peripheral stalk is formed by the delta and b chains.

It is found in the cell inner membrane. Key component of the proton channel; it plays a direct role in the translocation of protons across the membrane. In Gluconobacter oxydans (strain 621H) (Gluconobacter suboxydans), this protein is ATP synthase subunit a.